We begin with the raw amino-acid sequence, 300 residues long: Acyl-CoA-binding domain-containing protein 6 (300 aa).

Low complexity predominate over residues 1–19 (MASRSPSSSPDSATGSGTD). The tract at residues 1-43 (MASRSPSSSPDSATGSGTDPARPDTGEPLGGGSDSDSDFGLGK) is disordered. An ACB domain is found at 60–145 (LENEFESAAD…VHALDPEGSQ (86 aa)). Residues 87–91 (YARFK), Lys-113, and Tyr-132 contribute to the an acyl-CoA site. The disordered stretch occupies residues 142–162 (EGSQKSSERRGGEKRTGFGGP). Positions 147–157 (SSERRGGEKRT) are enriched in basic and acidic residues. ANK repeat units lie at residues 209 to 238 (EGRALLHWACDRGHKDLVSLLLQNNADINS) and 242 to 271 (EGQTALHYASACEFAEIVELLLKAGADPSI). The disordered stretch occupies residues 270-300 (SIKDQEGSLPEEVTESSAISSLLRQYTAPKG). Over residues 284–293 (ESSAISSLLR) the composition is skewed to polar residues.

In terms of tissue distribution, higly expressed in the central nervous system, developing eyes, otic vesicle, and trunk muscles.

The protein localises to the cytoplasm. The protein resides in the nucleus. Its function is as follows. Binds long-chain acyl-coenzyme A molecules with a strong preference for unsaturated C18:1-CoA. Does not bind fatty acids. Plays a role in protein N-myristoylation. The chain is Acyl-CoA-binding domain-containing protein 6 (acbd6) from Danio rerio (Zebrafish).